The following is a 469-amino-acid chain: Uronate isomerase (469 aa).

The protein belongs to the metallo-dependent hydrolases superfamily. Uronate isomerase family.

It catalyses the reaction D-glucuronate = D-fructuronate. The enzyme catalyses aldehydo-D-galacturonate = keto-D-tagaturonate. The protein operates within carbohydrate metabolism; pentose and glucuronate interconversion. The sequence is that of Uronate isomerase from Mesorhizobium japonicum (strain LMG 29417 / CECT 9101 / MAFF 303099) (Mesorhizobium loti (strain MAFF 303099)).